Reading from the N-terminus, the 359-residue chain is Olfactory receptor 8S1 (359 aa).

Residues 1–25 (MALGNHSTITEFLLLGLSADPNIRA) lie on the Extracellular side of the membrane. Residue N5 is glycosylated (N-linked (GlcNAc...) asparagine). Residues 26-46 (LLFVLFLGIYLLTIMENLMLL) form a helical membrane-spanning segment. Residues 47 to 54 (LMIRADSC) are Cytoplasmic-facing. The chain crosses the membrane as a helical span at residues 55–75 (LHKPMYFFLSHLSFVDLCFSS). Residues 76-99 (VIVPKMLENLLSQRKTISVEGCLA) are Extracellular-facing. A disulfide bond links C97 and C189. A helical membrane pass occupies residues 100–120 (QVFFVFVTAGTEACLLSGMAY). The Cytoplasmic portion of the chain corresponds to 121–139 (DRHAAICRPLLYGQIMGKQ). A helical transmembrane segment spans residues 140–160 (LYMHLVWGSWGLGFLDALINV). Topologically, residues 161–197 (LLAVNMVFCEAKIIHHYSYEMPSLLPLSCSDISRSLI) are extracellular. Residues 198–217 (ALLCSTLLHGLGNFLLVFLS) form a helical membrane-spanning segment. Topologically, residues 218–237 (YTRIISTILSISSTSGRSKA) are cytoplasmic. A helical membrane pass occupies residues 238-258 (FSTCSAHLTAVTLYYGSGLLR). Residues 259-269 (HLMPNSGSPIE) are Extracellular-facing. A helical transmembrane segment spans residues 270 to 290 (LIFSVQYTVVTPMLNSLIYSL). At 291–359 (KNKEVKGERS…ALRAAPTALP (69 aa)) the chain is on the cytoplasmic side. A disordered region spans residues 301–338 (LRDSSHLPQLHKGQARWKRPAFTEGRREPGHPELSIPV).

It belongs to the G-protein coupled receptor 1 family.

The protein localises to the cell membrane. Functionally, odorant receptor. The protein is Olfactory receptor 8S1 (OR8S1) of Homo sapiens (Human).